Reading from the N-terminus, the 1182-residue chain is Lysine-specific demethylase hairless (1182 aa).

Disordered regions lie at residues 227–257 (LGLA…GAGR), 302–380 (YQLG…KKTW), 411–443 (AGSP…ARAW), and 507–546 (TGHS…ASLN). Over residues 307–321 (PATPRCPSPGPPTPP) the composition is skewed to pro residues. Positions 561-565 (LCRLL) match the LXXLL motif 1 motif. The C6-type zinc finger occupies 595–620 (CSRCHHGLFNTHWRCSHCSHRLCVAC). A disordered region spans residues 697-746 (GDGGQQKEPTEKTPPTPQPSCNGDSNRTKDIKEETPDSTESPAEDGAGRS). The segment covering 722–731 (NRTKDIKEET) has biased composition (basic and acidic residues). Residues 753–757 (LCELL) carry the LXXLL motif 2 motif. One can recognise a JmjC domain in the interval 939–1150 (DASRVQNLAS…LSAQLYHQGA (212 aa)). Fe cation contacts are provided by Cys-1000, Glu-1002, and His-1118.

Fe(2+) is required as a cofactor. As to expression, expressed predominantly in brain, hair follicles and interfollicular epidermis. No expression in dermis.

It is found in the nucleus. The catalysed reaction is N(6),N(6)-dimethyl-L-lysyl(9)-[histone H3] + 2 2-oxoglutarate + 2 O2 = L-lysyl(9)-[histone H3] + 2 formaldehyde + 2 succinate + 2 CO2. Histone demethylase that specifically demethylates both mono- and dimethylated 'Lys-9' of histone H3. May act as a transcription regulator controlling hair biology (via targeting of collagens), neural activity, and cell cycle. The sequence is that of Lysine-specific demethylase hairless (Hr) from Mus musculus (Mouse).